The chain runs to 332 residues: Ketol-acid reductoisomerase (NADP(+)) (332 aa).

Residues 1–182 (MAQTWKDTDI…GSARAGLIKT (182 aa)) enclose the KARI N-terminal Rossmann domain. NADP(+) is bound by residues 25–28 (YGIQ), lysine 48, serine 53, and 83–86 (DMIQ). Histidine 108 is a catalytic residue. Glycine 134 contributes to the NADP(+) binding site. Residues 183–329 (AFKEEVETDW…KEMRKMMWPD (147 aa)) form the KARI C-terminal knotted domain. Mg(2+) is bound by residues aspartate 191, glutamate 195, glutamate 227, and glutamate 231. Residue serine 252 participates in substrate binding.

It belongs to the ketol-acid reductoisomerase family. The cofactor is Mg(2+).

It catalyses the reaction (2R)-2,3-dihydroxy-3-methylbutanoate + NADP(+) = (2S)-2-acetolactate + NADPH + H(+). It carries out the reaction (2R,3R)-2,3-dihydroxy-3-methylpentanoate + NADP(+) = (S)-2-ethyl-2-hydroxy-3-oxobutanoate + NADPH + H(+). Its pathway is amino-acid biosynthesis; L-isoleucine biosynthesis; L-isoleucine from 2-oxobutanoate: step 2/4. The protein operates within amino-acid biosynthesis; L-valine biosynthesis; L-valine from pyruvate: step 2/4. Its function is as follows. Involved in the biosynthesis of branched-chain amino acids (BCAA). Catalyzes an alkyl-migration followed by a ketol-acid reduction of (S)-2-acetolactate (S2AL) to yield (R)-2,3-dihydroxy-isovalerate. In the isomerase reaction, S2AL is rearranged via a Mg-dependent methyl migration to produce 3-hydroxy-3-methyl-2-ketobutyrate (HMKB). In the reductase reaction, this 2-ketoacid undergoes a metal-dependent reduction by NADPH to yield (R)-2,3-dihydroxy-isovalerate. This chain is Ketol-acid reductoisomerase (NADP(+)), found in Nitrosopumilus maritimus (strain SCM1).